The sequence spans 84 residues: Small ribosomal subunit protein uS17 (84 aa).

Belongs to the universal ribosomal protein uS17 family. Part of the 30S ribosomal subunit.

Its function is as follows. One of the primary rRNA binding proteins, it binds specifically to the 5'-end of 16S ribosomal RNA. This Legionella pneumophila (strain Paris) protein is Small ribosomal subunit protein uS17.